A 426-amino-acid polypeptide reads, in one-letter code: Histidine--tRNA ligase (426 aa).

Belongs to the class-II aminoacyl-tRNA synthetase family. In terms of assembly, homodimer.

It localises to the cytoplasm. It catalyses the reaction tRNA(His) + L-histidine + ATP = L-histidyl-tRNA(His) + AMP + diphosphate + H(+). This chain is Histidine--tRNA ligase, found in Prochlorococcus marinus (strain MIT 9312).